Consider the following 269-residue polypeptide: Probable cytochrome c oxidase subunit 2 (269 aa).

Helical transmembrane passes span 8–28 (ITLI…PLPW), 50–70 (LLYI…FVCI), and 87–107 (ILIE…IAVP). Residues His189, Cys224, Cys228, and His232 each coordinate Cu cation.

Belongs to the cytochrome c oxidase subunit 2 family. Cu cation serves as cofactor. Requires heme as cofactor.

It localises to the cell membrane. The enzyme catalyses 4 Fe(II)-[cytochrome c] + O2 + 8 H(+)(in) = 4 Fe(III)-[cytochrome c] + 2 H2O + 4 H(+)(out). In terms of biological role, subunits I and II form the functional core of the enzyme complex. Electrons originating in cytochrome c are transferred via heme a and Cu(A) to the binuclear center formed by heme a3 and Cu(B). This chain is Probable cytochrome c oxidase subunit 2 (ctaC), found in Rickettsia bellii (strain RML369-C).